Consider the following 266-residue polypeptide: Protein crossbronx-like (266 aa).

The UBC core domain maps to 15-178; that stretch reads KQGYKILAEY…IQELAISSRR (164 aa). Residues 216-266 form a disordered region; that stretch reads EATCEDDSPPAELLGHIDSSRQLDEDEANQRGKLQAATTDLQHGARCSVAQ.

It belongs to the ubiquitin-conjugating enzyme family. FTS subfamily.

The protein is Protein crossbronx-like of Drosophila ananassae (Fruit fly).